The following is a 432-amino-acid chain: Adenylosuccinate synthetase (432 aa).

Residues 12–18 (GDEGKGK) and 40–42 (GHT) contribute to the GTP site. Asp-13 acts as the Proton acceptor in catalysis. Mg(2+)-binding residues include Asp-13 and Gly-40. Residues 13 to 16 (DEGK), 38 to 41 (NAGH), Thr-128, Arg-142, Gln-223, Thr-238, and Arg-302 contribute to the IMP site. The Proton donor role is filled by His-41. 298 to 304 (TVTGRPR) contributes to the substrate binding site. GTP is bound by residues Arg-304, 330-332 (LLD), and 412-414 (SVG).

The protein belongs to the adenylosuccinate synthetase family. As to quaternary structure, homodimer. Mg(2+) is required as a cofactor.

The protein localises to the cytoplasm. It carries out the reaction IMP + L-aspartate + GTP = N(6)-(1,2-dicarboxyethyl)-AMP + GDP + phosphate + 2 H(+). Its pathway is purine metabolism; AMP biosynthesis via de novo pathway; AMP from IMP: step 1/2. Its function is as follows. Plays an important role in the de novo pathway of purine nucleotide biosynthesis. Catalyzes the first committed step in the biosynthesis of AMP from IMP. The protein is Adenylosuccinate synthetase of Limosilactobacillus reuteri (strain DSM 20016) (Lactobacillus reuteri).